The chain runs to 499 residues: T-cell activation inhibitor, mitochondrial (499 aa).

A coiled-coil region spans residues Leu206–Arg233.

Expressed in peripheral blood leukocytes, mainly in T-lymphocytes.

Its subcellular location is the mitochondrion. In terms of biological role, may regulate T-cell apoptosis. This chain is T-cell activation inhibitor, mitochondrial (TCAIM), found in Mus musculus (Mouse).